The chain runs to 336 residues: Holliday junction branch migration complex subunit RuvB (336 aa).

Positions 1-182 (MKERIVNLET…FGMSFRMQFY (182 aa)) are large ATPase domain (RuvB-L). Residues L21, R22, G63, K66, T67, S68, 129 to 131 (EDF), R172, Y182, and R219 each bind ATP. Residue T67 participates in Mg(2+) binding. The small ATPAse domain (RuvB-S) stretch occupies residues 183–253 (SPSELALIIK…ITLHALNELG (71 aa)). The head domain (RuvB-H) stretch occupies residues 256–336 (ELGFDEADLA…IPTLNPQTLF (81 aa)). Positions 310 and 315 each coordinate DNA.

Belongs to the RuvB family. In terms of assembly, homohexamer. Forms an RuvA(8)-RuvB(12)-Holliday junction (HJ) complex. HJ DNA is sandwiched between 2 RuvA tetramers; dsDNA enters through RuvA and exits via RuvB. An RuvB hexamer assembles on each DNA strand where it exits the tetramer. Each RuvB hexamer is contacted by two RuvA subunits (via domain III) on 2 adjacent RuvB subunits; this complex drives branch migration. In the full resolvosome a probable DNA-RuvA(4)-RuvB(12)-RuvC(2) complex forms which resolves the HJ.

The protein resides in the cytoplasm. The enzyme catalyses ATP + H2O = ADP + phosphate + H(+). Functionally, the RuvA-RuvB-RuvC complex processes Holliday junction (HJ) DNA during genetic recombination and DNA repair, while the RuvA-RuvB complex plays an important role in the rescue of blocked DNA replication forks via replication fork reversal (RFR). RuvA specifically binds to HJ cruciform DNA, conferring on it an open structure. The RuvB hexamer acts as an ATP-dependent pump, pulling dsDNA into and through the RuvAB complex. RuvB forms 2 homohexamers on either side of HJ DNA bound by 1 or 2 RuvA tetramers; 4 subunits per hexamer contact DNA at a time. Coordinated motions by a converter formed by DNA-disengaged RuvB subunits stimulates ATP hydrolysis and nucleotide exchange. Immobilization of the converter enables RuvB to convert the ATP-contained energy into a lever motion, pulling 2 nucleotides of DNA out of the RuvA tetramer per ATP hydrolyzed, thus driving DNA branch migration. The RuvB motors rotate together with the DNA substrate, which together with the progressing nucleotide cycle form the mechanistic basis for DNA recombination by continuous HJ branch migration. Branch migration allows RuvC to scan DNA until it finds its consensus sequence, where it cleaves and resolves cruciform DNA. The chain is Holliday junction branch migration complex subunit RuvB from Helicobacter pylori (strain Shi470).